A 187-amino-acid chain; its full sequence is Elongation factor P (187 aa).

Belongs to the elongation factor P family.

Its subcellular location is the cytoplasm. It participates in protein biosynthesis; polypeptide chain elongation. Functionally, involved in peptide bond synthesis. Stimulates efficient translation and peptide-bond synthesis on native or reconstituted 70S ribosomes in vitro. Probably functions indirectly by altering the affinity of the ribosome for aminoacyl-tRNA, thus increasing their reactivity as acceptors for peptidyl transferase. This Roseobacter denitrificans (strain ATCC 33942 / OCh 114) (Erythrobacter sp. (strain OCh 114)) protein is Elongation factor P.